The following is a 286-amino-acid chain: NAD kinase (286 aa).

Asp-74 (proton acceptor) is an active-site residue. NAD(+) contacts are provided by residues 74 to 75 (DG), 148 to 149 (ND), Asp-178, Ala-186, 189 to 194 (TAYNLS), and Gln-244.

This sequence belongs to the NAD kinase family. Requires a divalent metal cation as cofactor.

Its subcellular location is the cytoplasm. It carries out the reaction NAD(+) + ATP = ADP + NADP(+) + H(+). In terms of biological role, involved in the regulation of the intracellular balance of NAD and NADP, and is a key enzyme in the biosynthesis of NADP. Catalyzes specifically the phosphorylation on 2'-hydroxyl of the adenosine moiety of NAD to yield NADP. The protein is NAD kinase of Campylobacter jejuni subsp. jejuni serotype O:2 (strain ATCC 700819 / NCTC 11168).